A 1223-amino-acid chain; its full sequence is MGRMKKIFFNQKSDLNSMKLFFCNRIMNKGEIRRIIAWFLFNHGTSRTAHMVDRLKILGFYHATKAGISLSIDDLSIPPTKKWLLEDAEQEIAKTQKNYSIGKITAVERFQKVIDTWHSTSETLKNEVVQYFEQTNPLNPVYMMAFSGARGNLSQVSQLVGMRGLMSDPQGQIIDLPIRSNFREGLTVTEYVISCYGARKGLVDTALRTADSGYLTRRLVDVAQDMIIRETDCGTKSGILLGPVKDEQKVVFSLQERLIGRVLAENIYSPKQKQYIAKKNQDISASLSDKICEIKRTNILVRSPLTCKSIRSVCQLCYGWSLAHGNLVDLGEAVGIIAAQSIGEPGTQLTMRTFHTGGVFTGNIAKQIRSSIDGKIIYSLTNTIPMRTRHGEIALITQSNINICIQGKNKEFNIEVPINTILLVNNGSMVRAKQLIAEVSAPVNAQSVEIASKYVASDFSGEIHFENLLLQEKKSAYGHKMNRAGQYGGLLWILSGQVYKFSLDVPLMFDTADYIHNGSCMAEHNIISQYGGILQTSENNLTIDNSNSYLYVLNSSMTIINAYLSHIKNARSEAYILTDDLNQKFFMQVESNNVIKNNQIIAKFVTKTYLTNTGGILKYSSEIEVDEYDIVTQSYPVRKGGIIMWIPEETHLINKDASLLMVRDCEYVEAGTQIIKDLICHSSGLAQVSQTNDILREVVIKPGKIYRPIDFSQVLDKHQTLIQAGEEICDGIIAEELVYLENVNLSSGSALLIRPVVQFLIPNSTELKKLEAQYQLKQNISIQPSIHICYKDGQRIHAWQSMEIAKIFLRLEIDSHLHKLNVTLNLIENKLLQIKMFEYLMIDLNQIIDFQSYQNVTRLVRKFNNYIIPGTILAKTEIIAKDHGEVRQSNKNFEEQKSFLIMNEHDQMTLFVKNAYEFFQLGDLVHKGKEIVPGILAPQSGQVIQLQANRVTLRLARPYLVSSEAVLYVDDGDFVKSGDTLVMLIFEQSKTGDIVQGLPRIEELLEARRTKGLKPLPNNLHDLLQSFFDEATEKYGIQKAAKKSFEKLQLFLVNEVQSVYKAQGVHISDKHIEVIVRQMTSKVMIEEGGDTTLLPGELIELHRIENMNRNVSVHAKYKPIVLGITKASLNTESFISAASFQETTRVLTKAAIEGKTDWLRGLKENVIIGRLIPAGTGFNVHDKMYSRDLSLSNSYNLAYSSNSQHKRIEQKNAEYNFEDIIFD.

Positions 233, 307, 314, and 317 each coordinate Zn(2+).

It belongs to the RNA polymerase beta' chain family. RpoC2 subfamily. As to quaternary structure, in plastids the minimal PEP RNA polymerase catalytic core is composed of four subunits: alpha, beta, beta', and beta''. When a (nuclear-encoded) sigma factor is associated with the core the holoenzyme is formed, which can initiate transcription. Requires Zn(2+) as cofactor.

It is found in the plastid. Its subcellular location is the chloroplast. The enzyme catalyses RNA(n) + a ribonucleoside 5'-triphosphate = RNA(n+1) + diphosphate. In terms of biological role, DNA-dependent RNA polymerase catalyzes the transcription of DNA into RNA using the four ribonucleoside triphosphates as substrates. The sequence is that of DNA-directed RNA polymerase subunit beta'' from Mesostigma viride (Green alga).